The sequence spans 392 residues: GTPase Obg (392 aa).

Positions 1–159 (MKFIDEALIR…RDLQLELMLL (159 aa)) constitute an Obg domain. The OBG-type G domain maps to 160–333 (ADVGMLGLPN…LCRDIMDFIE (174 aa)). GTP is bound by residues 166–173 (GLPNAGKS), 191–195 (FTTLV), 213–216 (DIPG), 283–286 (NKID), and 314–316 (SAA). Positions 173 and 193 each coordinate Mg(2+). The disordered stretch occupies residues 362 to 392 (EQVFTEDDQEGDDWDDWSEDDEEGVEIIYKP). Acidic residues predominate over residues 365-386 (FTEDDQEGDDWDDWSEDDEEGV).

This sequence belongs to the TRAFAC class OBG-HflX-like GTPase superfamily. OBG GTPase family. Monomer. Mg(2+) is required as a cofactor.

It is found in the cytoplasm. Its function is as follows. An essential GTPase which binds GTP, GDP and possibly (p)ppGpp with moderate affinity, with high nucleotide exchange rates and a fairly low GTP hydrolysis rate. Plays a role in control of the cell cycle, stress response, ribosome biogenesis and in those bacteria that undergo differentiation, in morphogenesis control. The protein is GTPase Obg of Histophilus somni (strain 129Pt) (Haemophilus somnus).